Reading from the N-terminus, the 253-residue chain is tRNA pseudouridine synthase A (253 aa).

D51 (nucleophile) is an active-site residue. Y110 is a binding site for substrate.

It belongs to the tRNA pseudouridine synthase TruA family. In terms of assembly, homodimer.

The catalysed reaction is uridine(38/39/40) in tRNA = pseudouridine(38/39/40) in tRNA. In terms of biological role, formation of pseudouridine at positions 38, 39 and 40 in the anticodon stem and loop of transfer RNAs. The protein is tRNA pseudouridine synthase A of Wolinella succinogenes (strain ATCC 29543 / DSM 1740 / CCUG 13145 / JCM 31913 / LMG 7466 / NCTC 11488 / FDC 602W) (Vibrio succinogenes).